The sequence spans 264 residues: Zinc transporter ZupT (264 aa).

A run of 5 helical transmembrane segments spans residues 8-28 (AFIL…IAFV), 36-56 (FLSV…MIEI), 75-95 (WLTV…DKLI), 121-141 (GLMT…ATFI), and 148-168 (SIAI…GIAV). Fe(2+)-binding residues include asparagine 132 and glutamate 135. The Zn(2+) site is built by glutamate 135 and histidine 160. Fe(2+) contacts are provided by asparagine 161, glutamate 164, and glutamate 193. A Zn(2+)-binding site is contributed by glutamate 164. 3 consecutive transmembrane segments (helical) span residues 197-217 (AIIG…GAIF), 219-239 (AVAG…AEEY), and 244-264 (LAIY…LLFI).

This sequence belongs to the ZIP transporter (TC 2.A.5) family. ZupT subfamily.

The protein resides in the cell membrane. It carries out the reaction Zn(2+)(in) = Zn(2+)(out). In terms of biological role, mediates zinc uptake. May also transport other divalent cations. The chain is Zinc transporter ZupT from Streptococcus mutans serotype c (strain ATCC 700610 / UA159).